A 340-amino-acid chain; its full sequence is Glycerol-3-phosphate dehydrogenase [NAD(P)+] (340 aa).

4 residues coordinate NADPH: serine 14, phenylalanine 15, arginine 35, and lysine 108. Lysine 108 and glycine 136 together coordinate sn-glycerol 3-phosphate. Residue alanine 140 participates in NADPH binding. Residues lysine 191, aspartate 244, serine 254, arginine 255, and asparagine 256 each contribute to the sn-glycerol 3-phosphate site. Catalysis depends on lysine 191, which acts as the Proton acceptor. Arginine 255 provides a ligand contact to NADPH. Valine 279 and glutamate 281 together coordinate NADPH.

The protein belongs to the NAD-dependent glycerol-3-phosphate dehydrogenase family.

The protein resides in the cytoplasm. The enzyme catalyses sn-glycerol 3-phosphate + NAD(+) = dihydroxyacetone phosphate + NADH + H(+). It catalyses the reaction sn-glycerol 3-phosphate + NADP(+) = dihydroxyacetone phosphate + NADPH + H(+). It participates in membrane lipid metabolism; glycerophospholipid metabolism. Catalyzes the reduction of the glycolytic intermediate dihydroxyacetone phosphate (DHAP) to sn-glycerol 3-phosphate (G3P), the key precursor for phospholipid synthesis. In Azotobacter vinelandii (strain DJ / ATCC BAA-1303), this protein is Glycerol-3-phosphate dehydrogenase [NAD(P)+].